Reading from the N-terminus, the 113-residue chain is Ribonuclease P protein component (113 aa).

This sequence belongs to the RnpA family. In terms of assembly, consists of a catalytic RNA component (M1 or rnpB) and a protein subunit.

It carries out the reaction Endonucleolytic cleavage of RNA, removing 5'-extranucleotides from tRNA precursor.. RNaseP catalyzes the removal of the 5'-leader sequence from pre-tRNA to produce the mature 5'-terminus. It can also cleave other RNA substrates such as 4.5S RNA. The protein component plays an auxiliary but essential role in vivo by binding to the 5'-leader sequence and broadening the substrate specificity of the ribozyme. This Ureaplasma parvum serovar 3 (strain ATCC 27815 / 27 / NCTC 11736) protein is Ribonuclease P protein component.